The sequence spans 179 residues: Protein P20B (179 aa).

The sequence is that of Protein P20B from Vitis vinifera (Grape).